The following is a 179-amino-acid chain: Disulfide bond formation protein B (179 aa).

The Cytoplasmic portion of the chain corresponds to 1–14 (MLSYFKELSLNRTA). Residues 15 to 31 (WLLLAFVAFALEASAIY) traverse the membrane as a helical segment. Topologically, residues 32-49 (FQYGMGLVPCVMCVYERL) are periplasmic. A disulfide bridge links cysteine 41 with cysteine 44. Residues 50 to 65 (AIFGLLIAGLVGAISP) traverse the membrane as a helical segment. Residues 66-72 (RFFLTRW) lie on the Cytoplasmic side of the membrane. A helical transmembrane segment spans residues 73–90 (LALLLWGFSAFKGLALAI). The Periplasmic segment spans residues 91 to 146 (KHHDYQANPSPWNQCEFKPEFPQTMPFDQWFPSIFAPGPVNCSEKQWEMFGLGMPE). Cysteine 105 and cysteine 132 are oxidised to a cystine. A helical transmembrane segment spans residues 147–165 (WLILAFSIFALMFVIVLLS). The Cytoplasmic portion of the chain corresponds to 166-179 (QFKRAKPQYRSVFR).

The protein belongs to the DsbB family.

The protein localises to the cell inner membrane. Functionally, required for disulfide bond formation in some periplasmic proteins. Acts by oxidizing the DsbA protein. The sequence is that of Disulfide bond formation protein B from Actinobacillus pleuropneumoniae serotype 5b (strain L20).